We begin with the raw amino-acid sequence, 380 residues long: Cytochrome b (380 aa).

4 helical membrane passes run 34–54 (FGSLLGLFLTMQIITGIILAM), 78–100 (WLMRTMHMNGAAFMFICMYAHMG), 113–133 (TWNIGIIIMIATMATAFMGYV), and 179–199 (FFAFHFVLPFVLIALSGVHLL). Heme b-binding residues include His-84 and His-98. The heme b site is built by His-183 and His-197. His-202 contributes to the a ubiquinone binding site. Helical transmembrane passes span 225 to 245 (FSWKDLLGFAXMILIFCTITL), 289 to 309 (LGGVVALVGSLIIPATMMLTH), 324 to 344 (VIFWLFCANFIALSWIGAAPV), and 349 to 369 (ITLGQVFSMLYFLFFLTAPMI).

The protein belongs to the cytochrome b family. In terms of assembly, the main subunits of complex b-c1 are: cytochrome b, cytochrome c1 and the Rieske protein. Requires heme b as cofactor.

It localises to the mitochondrion inner membrane. In terms of biological role, component of the ubiquinol-cytochrome c reductase complex (complex III or cytochrome b-c1 complex) that is part of the mitochondrial respiratory chain. The b-c1 complex mediates electron transfer from ubiquinol to cytochrome c. Contributes to the generation of a proton gradient across the mitochondrial membrane that is then used for ATP synthesis. In Xenoturbella bocki (Marine worm), this protein is Cytochrome b (mt:Cyt-b).